A 573-amino-acid polypeptide reads, in one-letter code: Mucin-13 (573 aa).

A signal peptide spans 1 to 17; sequence MKGFLLLSLSLLLVTVG. Low complexity predominate over residues 16–234; the sequence is VGSSSQASST…VPSGGSTGPS (219 aa). Positions 16 to 237 are disordered; it reads VGSSSQASST…GGSTGPSDLC (222 aa). At 18 to 480 the chain is on the extracellular side; sequence SSSQASSTTS…FGYSGMNCKD (463 aa). The EGF-like 1 domain maps to 233-273; that stretch reads PSDLCNPNPCKGTASCVKLHSKHFCLCLEGYYYNSSLSSCV. 3 disulfides stabilise this stretch: Cys-237/Cys-248, Cys-242/Cys-257, and Cys-259/Cys-272. 3 N-linked (GlcNAc...) asparagine glycosylation sites follow: Asn-266, Asn-316, and Asn-397. The 118-residue stretch at 274–391 folds into the SEA domain; it reads KGTTFPGDIS…DYVSINLCDH (118 aa). EGF-like domains follow at residues 385-425 and 425-467; these read SINL…PFCV and VAVT…RKCE. 6 disulfide bridges follow: Cys-389–Cys-402, Cys-394–Cys-408, Cys-410–Cys-424, Cys-429–Cys-441, Cys-433–Cys-451, and Cys-453–Cys-466. The helical transmembrane segment at 481–508 threads the bilayer; that stretch reads QFQLILTIVGTIAGALILILLIAFIVSA. The Cytoplasmic segment spans residues 509-573; sequence RSKNKKKDGE…NQRSMPRPDY (65 aa). A disordered region spans residues 548-573; it reads PKVRTGVPSQTPNPYANQRSMPRPDY. The span at 554-567 shows a compositional bias: polar residues; sequence VPSQTPNPYANQRS.

As to quaternary structure, homodimer of beta subunits. Post-translationally, cleaved into two subunits, alpha and beta, probably between the first EGF domain and the SEA domain. Beta subunit contains the cytoplasmic tail and alpha subunit the extracellular tail. The homooligomerization into dimers is dependent on intrachain disulfide bonds. Highly N-glycosylated.

It localises to the cell membrane. The protein resides in the secreted. Functionally, epithelial and hemopoietic transmembrane mucin that may play a role in cell signaling. This chain is Mucin-13 (Muc13), found in Mus musculus (Mouse).